A 437-amino-acid chain; its full sequence is GTPase Der (437 aa).

EngA-type G domains are found at residues 4-167 and 176-352; these read PVVA…PDEA and IRFS…DNHR. Residues 10 to 17, 57 to 61, 119 to 122, 182 to 189, 230 to 234, and 295 to 298 each bind GTP; these read GRPNVGKS, DTGGI, NKVD, DTAGM, and NKWD. Residues 353–437 enclose the KH-like domain; that stretch reads KRISSSTLND…PIKLIVRARK (85 aa).

It belongs to the TRAFAC class TrmE-Era-EngA-EngB-Septin-like GTPase superfamily. EngA (Der) GTPase family. As to quaternary structure, associates with the 50S ribosomal subunit.

GTPase that plays an essential role in the late steps of ribosome biogenesis. The polypeptide is GTPase Der (Leuconostoc citreum (strain KM20)).